We begin with the raw amino-acid sequence, 274 residues long: tRNA (guanine-N(7)-)-methyltransferase (274 aa).

A disordered region spans residues 16–40; the sequence is ASASRGAATGSRGVAPAVPRGGAPA. Residues E106, E131, D158, and D181 each contribute to the S-adenosyl-L-methionine site. D181 is a catalytic residue. Residues K185, D217, and 252–255 contribute to the substrate site; that span reads TKFE.

It belongs to the class I-like SAM-binding methyltransferase superfamily. TrmB family.

The catalysed reaction is guanosine(46) in tRNA + S-adenosyl-L-methionine = N(7)-methylguanosine(46) in tRNA + S-adenosyl-L-homocysteine. The protein operates within tRNA modification; N(7)-methylguanine-tRNA biosynthesis. In terms of biological role, catalyzes the formation of N(7)-methylguanine at position 46 (m7G46) in tRNA. The chain is tRNA (guanine-N(7)-)-methyltransferase from Verminephrobacter eiseniae (strain EF01-2).